The sequence spans 447 residues: 23S rRNA (uracil(1939)-C(5))-methyltransferase RlmD (447 aa).

Residues 7–66 (RKPLSQEPQKASIEALTHEGRGIAHVAGKTVFIDGALPGETVWFHYLRRRGKFDEGRVLE) enclose the TRAM domain. Positions 79, 85, 88, and 168 each coordinate [4Fe-4S] cluster. Residues Gln-275, Phe-304, Asn-309, Glu-325, Asp-352, and Asp-374 each coordinate S-adenosyl-L-methionine. Cys-400 serves as the catalytic Nucleophile.

Belongs to the class I-like SAM-binding methyltransferase superfamily. RNA M5U methyltransferase family. RlmD subfamily.

The catalysed reaction is uridine(1939) in 23S rRNA + S-adenosyl-L-methionine = 5-methyluridine(1939) in 23S rRNA + S-adenosyl-L-homocysteine + H(+). Catalyzes the formation of 5-methyl-uridine at position 1939 (m5U1939) in 23S rRNA. The chain is 23S rRNA (uracil(1939)-C(5))-methyltransferase RlmD from Nitrosococcus oceani (strain ATCC 19707 / BCRC 17464 / JCM 30415 / NCIMB 11848 / C-107).